The sequence spans 125 residues: Oxytocin-neurophysin 1 (125 aa).

Positions 1-19 (MACPSLACCLLGLLALTSA) are cleaved as a signal peptide. The cysteines at positions 20 and 25 are disulfide-linked. G28 is subject to Glycine amide. Cystine bridges form between C41/C85, C44/C58, C52/C75, C59/C65, C92/C104, C98/C116, and C105/C110.

This sequence belongs to the vasopressin/oxytocin family. In terms of assembly, interacts with oxytocin receptor (Ki=1.5 nM). Interacts with vasopressin V1aR/AVPR1A (Ki=37 nM), V1bR/AVPR1B (Ki=222 nM), and V2R/AVPR2 receptors (Ki=823 nM).

Functionally, neurophysin 1 specifically binds oxytocin. Its function is as follows. Oxytocin causes contraction of the smooth muscle of the uterus and of the mammary gland. Acts by binding to oxytocin receptor (OXTR). The chain is Oxytocin-neurophysin 1 (Oxt) from Rattus norvegicus (Rat).